Consider the following 198-residue polypeptide: Recombination protein RecR (198 aa).

The C4-type zinc finger occupies 57–72 (CSICGNLTDDDPCHIC). Residues 80–175 (TTILVVEDAK…KVTRLARGLA (96 aa)) form the Toprim domain.

This sequence belongs to the RecR family.

May play a role in DNA repair. It seems to be involved in an RecBC-independent recombinational process of DNA repair. It may act with RecF and RecO. This Streptococcus pyogenes serotype M5 (strain Manfredo) protein is Recombination protein RecR.